The following is a 575-amino-acid chain: MITMINNKTFNRKTTGTLKKLVLSSDKSLRRSFNGASSTKDFVFSESSKVEEWWESARFKNISRPYSATDVVKHRGSLPANTSIYPSSYQARKLFNLLEENFKNGTPLHTLGVIDPVQMSQLARCRNIKVAYISGWACSSTLVGSTNEVSPDFGDYPYDTVPNQVERIFKAQQLHDRKAFLEASIKGSTPVDYLKPIIADADMGHGGPTTVMKVAKLFAEKGAAGIHLEDQMVGGKRCGHLSGAVLVPTATHLMRLISTRFQWDIMGTENLVIARTDSCNGKLLSSSSDPRDHEFIRGIIRDNVVPWSEKLIEMEDKKIPNSAIADMEKEWYHENELFTFEEALEKQFTASEFESYKEKKEDLMVNKLGRAYLSLREMKLLAQEVTPLKKIIFDWDAPRTKEGYYMFNGCIEAAIRRSLVFAPYSDMIWLETKTPDLEQARSFSRKIHKQLPATKLVYNLSPSFNWSAHGFDDKALKSFVWDLAKEGFTLQLVSLAGLHSDGVSFWELANSFQSDGMKAYVEKVQKREKETNCDIMTHQLWSGAEYVDSLMKVVQNGASSQTLSTSGESFTETQF.

Residue Cys-238 is part of the active site.

This sequence belongs to the isocitrate lyase/PEP mutase superfamily. Isocitrate lyase family.

Its subcellular location is the mitochondrion matrix. The enzyme catalyses (2S,3R)-3-hydroxybutane-1,2,3-tricarboxylate = pyruvate + succinate. The protein operates within organic acid metabolism; propanoate degradation. Its function is as follows. Catalyzes the formation of pyruvate and succinate from 2-methylisocitrate during the metabolism of endogenous propionyl-CoA. Does not act on isocitrate. This chain is Mitochondrial 2-methylisocitrate lyase ICL2 (ICL2), found in Saccharomyces cerevisiae (strain ATCC 204508 / S288c) (Baker's yeast).